Consider the following 425-residue polypeptide: Gamma-glutamyl phosphate reductase (425 aa).

It belongs to the gamma-glutamyl phosphate reductase family.

The protein localises to the cytoplasm. The catalysed reaction is L-glutamate 5-semialdehyde + phosphate + NADP(+) = L-glutamyl 5-phosphate + NADPH + H(+). It participates in amino-acid biosynthesis; L-proline biosynthesis; L-glutamate 5-semialdehyde from L-glutamate: step 2/2. In terms of biological role, catalyzes the NADPH-dependent reduction of L-glutamate 5-phosphate into L-glutamate 5-semialdehyde and phosphate. The product spontaneously undergoes cyclization to form 1-pyrroline-5-carboxylate. The protein is Gamma-glutamyl phosphate reductase of Novosphingobium aromaticivorans (strain ATCC 700278 / DSM 12444 / CCUG 56034 / CIP 105152 / NBRC 16084 / F199).